The primary structure comprises 541 residues: Sorting nexin-27 (541 aa).

The tract at residues Met-1–Arg-42 is disordered. A compositionally biased stretch (gly residues) spans Asn-17–Pro-41. In terms of domain architecture, PDZ spans Val-43–Pro-136. Phosphoserine is present on residues Ser-51 and Ser-62. The PX domain maps to Gln-161–Tyr-269. The Ras-associating domain maps to Ser-273 to Phe-362. Residues Ser-273–Phe-362 are FERM-like region F1. An FERM-like region F2 region spans residues Asn-373–Cys-421. The FERM-like region F3 stretch occupies residues Asn-425–Lys-525.

It belongs to the sorting nexin family. In terms of assembly, core component of the SNX27-retromer, a multiprotein complex composed of SNX27, the WASH complex and the retromer complex. Interacts (via PDZ domain) with a number of target transmembrane proteins (via PDZ-binding motif): ABCC4, ADRB2, ARHGEF7, GRIA1, GRIA2, GRIN1, GRIN2A GRIN2C, KCNJ6, KCNJ9 and SLC2A1/GLUT1. Interacts (via the FERM-like regions) with the WASH complex. Interacts with SNX1. Interacts with CYTIP. Isoform 1 and isoform 2 directly interact with DGKZ. Isoform 1 and isoform 2 interact with HT4R isoform 5-HTA(A). Interacts with MCC. Interacts (via PDZ domains) with SLC9A3; directs SLC9A3 membrane insertion from early endosomes to the plasma membrane. Widely expressed. Expressed in cells of hematopoietic origin (at protein level).

It is found in the early endosome membrane. The protein resides in the cytoplasm. Its subcellular location is the cytosol. Involved in the retrograde transport from endosome to plasma membrane, a trafficking pathway that promotes the recycling of internalized transmembrane proteins. Following internalization, endocytosed transmembrane proteins are delivered to early endosomes and recycled to the plasma membrane instead of being degraded in lysosomes. SNX27 specifically binds and directs sorting of a subset of transmembrane proteins containing a PDZ-binding motif at the C-terminus: following interaction with target transmembrane proteins, associates with the retromer complex, preventing entry into the lysosomal pathway, and promotes retromer-tubule based plasma membrane recycling. SNX27 also binds with the WASH complex. Interacts with membranes containing phosphatidylinositol-3-phosphate (PtdIns(3P)). May participate in establishment of natural killer cell polarity. Recruits CYTIP to early endosomes. In Homo sapiens (Human), this protein is Sorting nexin-27 (SNX27).